The following is a 423-amino-acid chain: Histidine--tRNA ligase (423 aa).

The protein belongs to the class-II aminoacyl-tRNA synthetase family. Homodimer.

It is found in the cytoplasm. It catalyses the reaction tRNA(His) + L-histidine + ATP = L-histidyl-tRNA(His) + AMP + diphosphate + H(+). This Pasteurella multocida (strain Pm70) protein is Histidine--tRNA ligase (hisS).